The primary structure comprises 547 residues: Elongator complex protein 3 (547 aa).

Positions 82 to 372 (RTASGIAVVA…YRVQRDIPMP (291 aa)) constitute a Radical SAM core domain. [4Fe-4S] cluster-binding residues include cysteine 99, cysteine 109, and cysteine 112. Position 161 is a phosphoserine (serine 161). An acetyl-CoA-binding site is contributed by lysine 164. Position 229 is an N6-methyllysine (lysine 229). A Phosphotyrosine modification is found at tyrosine 251. Residues 396 to 547 (IQCRDVRTRE…QGPYMVKMLK (152 aa)) form the N-acetyltransferase domain. Acetyl-CoA-binding positions include 474-477 (ELHV), 497-499 (FGM), and tyrosine 530.

The protein belongs to the ELP3 family. As to quaternary structure, component of the elongator complex which consists of ELP1, ELP2, ELP3, ELP4, ELP5 and ELP6. ELP1, ELP2 and ELP3 form the elongator core complex. Interacts with alpha-tubulin. It depends on [4Fe-4S] cluster as a cofactor. In terms of processing, tyrosine-phosphorylated. Also serine/threonine-phosphorylated.

It is found in the cytoplasm. The protein resides in the nucleus. It carries out the reaction uridine(34) in tRNA + acetyl-CoA + S-adenosyl-L-methionine + H2O = 5-(carboxymethyl)uridine(34) in tRNA + 5'-deoxyadenosine + L-methionine + CoA + 2 H(+). It participates in tRNA modification; 5-methoxycarbonylmethyl-2-thiouridine-tRNA biosynthesis. In terms of biological role, catalytic tRNA acetyltransferase subunit of the elongator complex which is required for multiple tRNA modifications, including mcm5U (5-methoxycarbonylmethyl uridine), mcm5s2U (5-methoxycarbonylmethyl-2-thiouridine), and ncm5U (5-carbamoylmethyl uridine). In the elongator complex, acts as a tRNA uridine(34) acetyltransferase by mediating formation of carboxymethyluridine in the wobble base at position 34 in tRNAs. May also act as a protein lysine acetyltransferase by mediating acetylation of target proteins; such activity is however unclear in vivo and recent evidences suggest that ELP3 primarily acts as a tRNA acetyltransferase. Involved in neurogenesis: regulates the migration and branching of projection neurons in the developing cerebral cortex, through a process depending on alpha-tubulin acetylation. Required for acetylation of GJA1 in the developing cerebral cortex. The polypeptide is Elongator complex protein 3 (Mus musculus (Mouse)).